The following is a 245-amino-acid chain: UPF0328 protein ECU09_2010 (245 aa).

It belongs to the UPF0328 family.

This chain is UPF0328 protein ECU09_2010, found in Encephalitozoon cuniculi (strain GB-M1) (Microsporidian parasite).